A 147-amino-acid polypeptide reads, in one-letter code: MDHSKYLLTIFLENDDSFFKYLSEQDDETAMSDIETIVTYLNFLLSLLIRSKDKLESIGYYYEPLSEECKTLVDFSNMKNFRILFNKIPINILNKQITVNKGYLSDFVTTLMRLKKELFLESPEPITYIDPRKDPTFLNILSILHEK.

Belongs to the chordopoxvirinae J1 family. As to quaternary structure, homodimer. Part of a complex composed of A30, G7, F10 kinase, A15, D2, D3, and J1. Interacts with A45.

It localises to the virion. The protein resides in the host cytoplasm. Functionally, late protein which is a part of a large complex required for early virion morphogenesis. This complex participates in the formation of virosomes and the incorporation of virosomal contents into nascent immature virions. J1 protein is required for DNA packaging during immature virions (IV) formation. The chain is Protein J1 homolog from Sheeppox virus (strain KS-1) (SPPV).